The sequence spans 302 residues: tRNA dimethylallyltransferase (302 aa).

Position 2-9 (2-9 (GPTACGKS)) interacts with ATP. 4–9 (TACGKS) serves as a coordination point for substrate. Interaction with substrate tRNA stretches follow at residues 27–30 (DSAL) and 149–153 (QRLIR).

This sequence belongs to the IPP transferase family. As to quaternary structure, monomer. Mg(2+) serves as cofactor.

The catalysed reaction is adenosine(37) in tRNA + dimethylallyl diphosphate = N(6)-dimethylallyladenosine(37) in tRNA + diphosphate. Functionally, catalyzes the transfer of a dimethylallyl group onto the adenine at position 37 in tRNAs that read codons beginning with uridine, leading to the formation of N6-(dimethylallyl)adenosine (i(6)A). This chain is tRNA dimethylallyltransferase, found in Buchnera aphidicola subsp. Acyrthosiphon pisum (strain 5A).